Reading from the N-terminus, the 541-residue chain is Tyrosine-protein kinase Yes (541 aa).

Residues 1–10 are compositionally biased toward basic and acidic residues; the sequence is MGCIKSKENK. A disordered region spans residues 1–29; it reads MGCIKSKENKSPAIKYTPENPTEPVNTSA. A lipid anchor (N-myristoyl glycine) is attached at G2. C3 is lipidated: S-palmitoyl cysteine; in membrane form. The segment covering 19-29 has biased composition (polar residues); the sequence is ENPTEPVNTSA. Y32 is modified (phosphotyrosine). Positions 89 to 150 constitute an SH3 domain; the sequence is GGVTIFVALY…PSNYVAPADS (62 aa). Residues 156–253 enclose the SH2 domain; sequence WYFGKMGRKD…GLCHKLTTVC (98 aa). Residues 275–528 enclose the Protein kinase domain; it reads LRLEVKLGQG…YIQSFLEDYF (254 aa). Residues 281–289 and K303 contribute to the ATP site; that span reads LGQGCFGEV. Phosphotyrosine is present on residues Y334 and Y343. Catalysis depends on D394, which acts as the Proton acceptor. Phosphotyrosine; by autocatalysis is present on Y424. Y535 is modified (phosphotyrosine).

In terms of assembly, interacts with YAP1 and CSF1R. Interacts with FASLG. Interacts with CTNND1; this interaction allows YES1-mediated activation of FYN and FER and subsequent phosphorylation of CTNND1. Interacts with IL6ST/gp130. Interacts with SCRIB, when YES1 is in a closed conformation; the interaction facilitates YES1 autophosphorylation. In terms of processing, phosphorylated. Phosphorylation by CSK on the C-terminal tail maintains the enzyme in an inactive state. Autophosphorylation at Tyr-424 maintains enzyme activity by blocking CSK-mediated inhibition. Post-translationally, palmitoylation at Cys-3 promotes membrane localization.

The protein resides in the cell membrane. Its subcellular location is the cytoplasm. It localises to the cytoskeleton. It is found in the microtubule organizing center. The protein localises to the centrosome. The protein resides in the cytosol. Its subcellular location is the cell junction. It carries out the reaction L-tyrosyl-[protein] + ATP = O-phospho-L-tyrosyl-[protein] + ADP + H(+). Functionally, non-receptor protein tyrosine kinase that is involved in the regulation of cell growth and survival, apoptosis, cell-cell adhesion, cytoskeleton remodeling, and differentiation. Stimulation by receptor tyrosine kinases (RTKs) including EGFR, PDGFR, CSF1R and FGFR leads to recruitment of YES1 to the phosphorylated receptor, and activation and phosphorylation of downstream substrates. Upon EGFR activation, promotes the phosphorylation of PARD3 to favor epithelial tight junction assembly. Participates in the phosphorylation of specific junctional components such as CTNND1 by stimulating the FYN and FER tyrosine kinases at cell-cell contacts. Upon T-cell stimulation by CXCL12, phosphorylates collapsin response mediator protein 2/DPYSL2 and induces T-cell migration. Participates in CD95L/FASLG signaling pathway and mediates AKT-mediated cell migration. Plays a role in cell cycle progression by phosphorylating the cyclin dependent kinase 4/CDK4 thus regulating the G1 phase. Also involved in G2/M progression and cytokinesis. Catalyzes phosphorylation of organic cation transporter OCT2 which induces its transport activity. This is Tyrosine-protein kinase Yes (Yes1) from Rattus norvegicus (Rat).